A 257-amino-acid chain; its full sequence is Thiazole synthase (257 aa).

Catalysis depends on lysine 96, which acts as the Schiff-base intermediate with DXP. 1-deoxy-D-xylulose 5-phosphate-binding positions include glycine 157, 184 to 185 (AG), and 206 to 207 (NT).

It belongs to the ThiG family. As to quaternary structure, homotetramer. Forms heterodimers with either ThiH or ThiS.

It localises to the cytoplasm. It carries out the reaction [ThiS sulfur-carrier protein]-C-terminal-Gly-aminoethanethioate + 2-iminoacetate + 1-deoxy-D-xylulose 5-phosphate = [ThiS sulfur-carrier protein]-C-terminal Gly-Gly + 2-[(2R,5Z)-2-carboxy-4-methylthiazol-5(2H)-ylidene]ethyl phosphate + 2 H2O + H(+). It functions in the pathway cofactor biosynthesis; thiamine diphosphate biosynthesis. Functionally, catalyzes the rearrangement of 1-deoxy-D-xylulose 5-phosphate (DXP) to produce the thiazole phosphate moiety of thiamine. Sulfur is provided by the thiocarboxylate moiety of the carrier protein ThiS. In vitro, sulfur can be provided by H(2)S. This Rhizobium rhizogenes (strain K84 / ATCC BAA-868) (Agrobacterium radiobacter) protein is Thiazole synthase.